The chain runs to 232 residues: Large ribosomal subunit protein uL1 (232 aa).

Belongs to the universal ribosomal protein uL1 family. In terms of assembly, part of the 50S ribosomal subunit.

In terms of biological role, binds directly to 23S rRNA. The L1 stalk is quite mobile in the ribosome, and is involved in E site tRNA release. Functionally, protein L1 is also a translational repressor protein, it controls the translation of the L11 operon by binding to its mRNA. This Xanthomonas oryzae pv. oryzae (strain KACC10331 / KXO85) protein is Large ribosomal subunit protein uL1.